Consider the following 640-residue polypeptide: Chaperone protein DnaK (640 aa).

Thr-199 bears the Phosphothreonine; by autocatalysis mark. Positions 603–640 (YAAGETESSAAEPGEPQEKTVDAEVVDAEFEEVKDDKK) are disordered. Acidic residues predominate over residues 626–640 (EVVDAEFEEVKDDKK).

This sequence belongs to the heat shock protein 70 family.

Its function is as follows. Acts as a chaperone. The protein is Chaperone protein DnaK of Methylobacillus flagellatus (strain ATCC 51484 / DSM 6875 / VKM B-1610 / KT).